Reading from the N-terminus, the 594-residue chain is UvrABC system protein C (594 aa).

Residues asparagine 13–isoleucine 99 form the GIY-YIG domain. A UVR domain is found at aspartate 205 to isoleucine 240.

It belongs to the UvrC family. In terms of assembly, interacts with UvrB in an incision complex.

The protein resides in the cytoplasm. Its function is as follows. The UvrABC repair system catalyzes the recognition and processing of DNA lesions. UvrC both incises the 5' and 3' sides of the lesion. The N-terminal half is responsible for the 3' incision and the C-terminal half is responsible for the 5' incision. In Helicobacter pylori (strain G27), this protein is UvrABC system protein C.